We begin with the raw amino-acid sequence, 428 residues long: Cytochrome P450-terp (428 aa).

Cys377 contributes to the heme binding site.

It belongs to the cytochrome P450 family. The cofactor is heme.

The protein resides in the cytoplasm. Its function is as follows. Catalyzes the hydroxylation of alpha-terpineol. This chain is Cytochrome P450-terp (cyp108), found in Pseudomonas sp.